A 439-amino-acid polypeptide reads, in one-letter code: Probable RNA-binding protein 23 (439 aa).

Residues 13–159 (MLEAPYKKEE…PVREPVDNLS (147 aa)) are disordered. A compositionally biased stretch (basic and acidic residues) spans 17–34 (PYKKEEDEQQRKEVKKDY). Low complexity predominate over residues 36–57 (SNTTSSTSNSGNETSGSSTIGE). Over residues 60 to 90 (KKKRSRSHNKSRDRKRSRSRDRDRYRRRNSR) the composition is skewed to basic residues. The span at 103-125 (RSWDRRHGSESRSRDHRREDRVH) shows a compositional bias: basic and acidic residues. A phosphoserine mark is found at Ser-128 and Ser-149. The segment covering 144-159 (HFREKSPVREPVDNLS) has biased composition (basic and acidic residues). 2 RRM domains span residues 166-243 (RTVF…ASQA) and 263-341 (MRLY…HVTE).

It belongs to the splicing factor SR family. In terms of processing, aryl sulfonamide anticancer drugs, such as indisulam (E7070) or E7820, promote ubiquitination and subsequent degradation by the DCX(DCAF15) complex. Aryl sulfonamide anticancer drugs change the substrate specificity of DCAF15 by acting as a molecular glue that promotes binding between DCAF15 and weak affinity interactor RBM23. Highly expressed in placenta, liver, skeletal muscle, heart and kidney. Expressed at lower levels in the colon, thymus, spleen, small intestine and lung.

The protein resides in the nucleus. Its function is as follows. RNA-binding protein that acts both as a transcription coactivator and pre-mRNA splicing factor. Regulates steroid hormone receptor-mediated transcription, independently of the pre-mRNA splicing factor activity. The protein is Probable RNA-binding protein 23 of Homo sapiens (Human).